A 336-amino-acid chain; its full sequence is DNA-directed RNA polymerase subunit alpha (336 aa).

An alpha N-terminal domain (alpha-NTD) region spans residues 1-226; that stretch reads MLIAQRPTLS…ELFGLARELN (226 aa). The tract at residues 241 to 336 is alpha C-terminal domain (alpha-CTD); that stretch reads AALAADMALP…DDAAFSDDEL (96 aa).

This sequence belongs to the RNA polymerase alpha chain family. In terms of assembly, homodimer. The RNAP catalytic core consists of 2 alpha, 1 beta, 1 beta' and 1 omega subunit. When a sigma factor is associated with the core the holoenzyme is formed, which can initiate transcription.

The enzyme catalyses RNA(n) + a ribonucleoside 5'-triphosphate = RNA(n+1) + diphosphate. DNA-dependent RNA polymerase catalyzes the transcription of DNA into RNA using the four ribonucleoside triphosphates as substrates. The polypeptide is DNA-directed RNA polymerase subunit alpha (Paenarthrobacter aurescens (strain TC1)).